A 616-amino-acid polypeptide reads, in one-letter code: Probable Xaa-Pro aminopeptidase P (616 aa).

The Mn(2+) site is built by Asp-413, Asp-424, Glu-522, and Glu-536.

The protein belongs to the peptidase M24B family. Requires Mn(2+) as cofactor.

The enzyme catalyses Release of any N-terminal amino acid, including proline, that is linked to proline, even from a dipeptide or tripeptide.. Its function is as follows. Catalyzes the removal of a penultimate prolyl residue from the N-termini of peptides. In Paracoccidioides lutzii (strain ATCC MYA-826 / Pb01) (Paracoccidioides brasiliensis), this protein is Probable Xaa-Pro aminopeptidase P (AMPP).